The sequence spans 378 residues: Chaperone protein DnaJ (378 aa).

One can recognise a J domain in the interval 5–70; it reads DYYEVLGLQK…EKRAMYDQYG (66 aa). The CR-type zinc-finger motif lies at 135-213; sequence GVKKDIRIRT…CHGDGRVEKT (79 aa). Positions 148, 151, 165, 168, 187, 190, 201, and 204 each coordinate Zn(2+). CXXCXGXG motif repeat units follow at residues 148–155, 165–172, 187–194, and 201–208; these read CDTCHGSG, CPHCHGSG, CPSCHGTG, and CKSCHGDG.

It belongs to the DnaJ family. Homodimer. Requires Zn(2+) as cofactor.

The protein localises to the cytoplasm. In terms of biological role, participates actively in the response to hyperosmotic and heat shock by preventing the aggregation of stress-denatured proteins and by disaggregating proteins, also in an autonomous, DnaK-independent fashion. Unfolded proteins bind initially to DnaJ; upon interaction with the DnaJ-bound protein, DnaK hydrolyzes its bound ATP, resulting in the formation of a stable complex. GrpE releases ADP from DnaK; ATP binding to DnaK triggers the release of the substrate protein, thus completing the reaction cycle. Several rounds of ATP-dependent interactions between DnaJ, DnaK and GrpE are required for fully efficient folding. Also involved, together with DnaK and GrpE, in the DNA replication of plasmids through activation of initiation proteins. This chain is Chaperone protein DnaJ, found in Glaesserella parasuis serovar 5 (strain SH0165) (Haemophilus parasuis).